We begin with the raw amino-acid sequence, 191 residues long: Dephospho-CoA kinase (191 aa).

The DPCK domain occupies 3–191 (AIGITGSYAS…KLILVIARKL (189 aa)). Position 11-16 (11-16 (ASGKTF)) interacts with ATP.

Belongs to the CoaE family.

The protein resides in the cytoplasm. The catalysed reaction is 3'-dephospho-CoA + ATP = ADP + CoA + H(+). It functions in the pathway cofactor biosynthesis; coenzyme A biosynthesis; CoA from (R)-pantothenate: step 5/5. Functionally, catalyzes the phosphorylation of the 3'-hydroxyl group of dephosphocoenzyme A to form coenzyme A. The protein is Dephospho-CoA kinase of Rickettsia felis (strain ATCC VR-1525 / URRWXCal2) (Rickettsia azadi).